The chain runs to 396 residues: Anaerobic glycerol-3-phosphate dehydrogenase subunit C (396 aa).

4Fe-4S ferredoxin-type domains lie at 2–29 (NDTS…PGYP) and 45–76 (DGAL…GDII). C9, C12, C15, C19, C56, C59, C62, and C66 together coordinate [4Fe-4S] cluster.

In terms of assembly, composed of a catalytic GlpA/B dimer and of GlpC.

The protein localises to the cell inner membrane. It participates in polyol metabolism; glycerol degradation via glycerol kinase pathway; glycerone phosphate from sn-glycerol 3-phosphate (anaerobic route): step 1/1. Electron transfer protein; may also function as the membrane anchor for the GlpAB dimer. The polypeptide is Anaerobic glycerol-3-phosphate dehydrogenase subunit C (glpC) (Escherichia coli O157:H7).